The following is a 343-amino-acid chain: Selenide, water dikinase (343 aa).

Residue selenocysteine 13 is part of the active site. Position 13 (selenocysteine 13) is a non-standard amino acid, selenocysteine. ATP contacts are provided by residues lysine 16 and 44-46 (TAD). Aspartate 47 lines the Mg(2+) pocket. ATP is bound by residues aspartate 64, aspartate 87, and 135–137 (GHT). Aspartate 87 is a binding site for Mg(2+). Residue aspartate 223 participates in Mg(2+) binding.

The protein belongs to the selenophosphate synthase 1 family. Class I subfamily. Homodimer. Mg(2+) is required as a cofactor.

It catalyses the reaction hydrogenselenide + ATP + H2O = selenophosphate + AMP + phosphate + 2 H(+). Synthesizes selenophosphate from selenide and ATP. The sequence is that of Selenide, water dikinase from Geobacter metallireducens (strain ATCC 53774 / DSM 7210 / GS-15).